The sequence spans 759 residues: Spindle pole body component alp16 (759 aa).

In terms of assembly, interacts with gamma-tubulin.

Its subcellular location is the cytoplasm. It is found in the cytoskeleton. The protein resides in the microtubule organizing center. The protein localises to the spindle pole body. Functionally, component of the gamma tubule complex that is required for the regulation of both interphase microtubules and mitotic bipolar spindles. In Schizosaccharomyces pombe (strain 972 / ATCC 24843) (Fission yeast), this protein is Spindle pole body component alp16 (alp16).